The primary structure comprises 92 residues: MGRSLKKGPFVAASLLRKIDKLNDKGDKQVVKTWSRASTILPQMVGHTIAVHNGRQHVPVFVSEQMVGHKLGEFAPTRTFRSHSKSDKKARK.

It belongs to the universal ribosomal protein uS19 family.

In terms of biological role, protein S19 forms a complex with S13 that binds strongly to the 16S ribosomal RNA. This Synechocystis sp. (strain ATCC 27184 / PCC 6803 / Kazusa) protein is Small ribosomal subunit protein uS19 (rpsS).